A 307-amino-acid polypeptide reads, in one-letter code: 2,4-diacetylphloroglucinol hydrolase (307 aa).

His142, Glu173, His283, and Glu287 together coordinate Zn(2+).

Belongs to the DAPG/phloretin hydrolase family. It depends on Zn(2+) as a cofactor.

The catalysed reaction is 2,4-diacetylphloroglucinol + H2O = 2-acetylphloroglucinol + acetate. With respect to regulation, activity is strongly reduced by pyoluteorin, an antifungal compound produced by the bacterium. Hydrolase that specifically degrades the potent antimicrobial compound 2,4-diacetylphloroglucinol (DAPG) to equimolar amounts of mildly toxic monoacetylphloroglucinol (MAPG) and acetate. Does not degrade other compounds with structures similar to DAPG, such as MAPG and triacetylphloroglucinol, suggesting strict substrate specificity. Degradation of DAPG to MAPG may provide an additional means of fine-tuning levels of this antibiotic or may help avoid accumulation of a metabolite that at high levels may become toxic to the producing bacterium. The sequence is that of 2,4-diacetylphloroglucinol hydrolase from Pseudomonas protegens (strain DSM 19095 / LMG 27888 / CFBP 6595 / CHA0).